Reading from the N-terminus, the 485-residue chain is MIMSLSILYILPEILLALGVIVVMFSGLFLHGKIRNINYIFFQVFTLLALIATFAKEYLIQTTGLVFEGQVVFSGFAYTLQLVILVLAVFVALYSRDYVKDRKISDGDFYTLLMLCVLGAMVLTAAHSLVTIYVGLELLSLPMYALIAIYRDSGKGLEAAIKYFVLGAIASALLLFGMSFVYGMTGKLDITEIANVLAHGNFAGLQQQFLLVYLVMMIATFLFKLGAFPFHMWLPDVYQGAPNAVANIVATIPKVAAFAMLVNILFVGFPSLKDSWIYLFRIIGILSIFFGSLVALSQTNVKRLLGYSTVSQIGFVLLATTLNPQGYALTAASFYVIVYLFTTLAVFGVLTTISVGGYEVQDLNDLKGFNTKDSWLAFILLIVLFSMAGIPPFGGFIAKLFVVMGLINDGNYFLACFVLFMAVIASFYYVRVIKTMYFDDPDNDETVKPPLTSLIALSINGLVLLFLGIMPMLLLGVLTQVTNVI.

14 consecutive transmembrane segments (helical) span residues 10–30, 40–60, 71–91, 107–127, 129–149, 164–184, 209–229, 248–268, 276–296, 304–324, 336–356, 377–397, 410–430, and 454–474; these read ILPEILLALGVIVVMFSGLFL, IFFQVFTLLALIATFAKEYLI, VVFSGFAYTLQLVILVLAVFV, GDFYTLLMLCVLGAMVLTAAH, LVTIYVGLELLSLPMYALIAI, FVLGAIASALLLFGMSFVYGM, FLLVYLVMMIATFLFKLGAFP, IVATIPKVAAFAMLVNILFVG, WIYLFRIIGILSIFFGSLVAL, LLGYSTVSQIGFVLLATTLNP, VIVYLFTTLAVFGVLTTISVG, AFILLIVLFSMAGIPPFGGFI, GNYFLACFVLFMAVIASFYYV, and LIALSINGLVLLFLGIMPMLL.

This sequence belongs to the complex I subunit 2 family. In terms of assembly, NDH-1 is composed of 14 different subunits. Subunits NuoA, H, J, K, L, M, N constitute the membrane sector of the complex.

The protein localises to the cell inner membrane. It catalyses the reaction a quinone + NADH + 5 H(+)(in) = a quinol + NAD(+) + 4 H(+)(out). In terms of biological role, NDH-1 shuttles electrons from NADH, via FMN and iron-sulfur (Fe-S) centers, to quinones in the respiratory chain. The immediate electron acceptor for the enzyme in this species is believed to be ubiquinone. Couples the redox reaction to proton translocation (for every two electrons transferred, four hydrogen ions are translocated across the cytoplasmic membrane), and thus conserves the redox energy in a proton gradient. This chain is NADH-quinone oxidoreductase subunit N, found in Francisella tularensis subsp. holarctica (strain FTNF002-00 / FTA).